The following is a 498-amino-acid chain: ATP synthase subunit beta, chloroplastic (498 aa).

ATP is bound at residue 172–179 (GGAGVGKT).

Belongs to the ATPase alpha/beta chains family. As to quaternary structure, F-type ATPases have 2 components, CF(1) - the catalytic core - and CF(0) - the membrane proton channel. CF(1) has five subunits: alpha(3), beta(3), gamma(1), delta(1), epsilon(1). CF(0) has four main subunits: a(1), b(1), b'(1) and c(9-12).

Its subcellular location is the plastid. It is found in the chloroplast thylakoid membrane. The catalysed reaction is ATP + H2O + 4 H(+)(in) = ADP + phosphate + 5 H(+)(out). Produces ATP from ADP in the presence of a proton gradient across the membrane. The catalytic sites are hosted primarily by the beta subunits. This Gossypium hirsutum (Upland cotton) protein is ATP synthase subunit beta, chloroplastic.